Here is a 263-residue protein sequence, read N- to C-terminus: Glucosamine-6-phosphate deaminase 2 (263 aa).

The active-site Proton acceptor; for enolization step is the aspartate 82. Asparagine 151 acts as the For ring-opening step in catalysis. The Proton acceptor; for ring-opening step role is filled by histidine 153. Glutamate 158 serves as the catalytic For ring-opening step.

The protein belongs to the glucosamine/galactosamine-6-phosphate isomerase family. As to quaternary structure, homohexamer.

The catalysed reaction is alpha-D-glucosamine 6-phosphate + H2O = beta-D-fructose 6-phosphate + NH4(+). Its function is as follows. Catalyzes the reversible conversion of alpha-D-glucosamine 6-phosphate (GlcN-6P) into beta-D-fructose 6-phosphate (Fru-6P) and ammonium ion, a regulatory reaction step in de novo uridine diphosphate-N-acetyl-alpha-D-glucosamine (UDP-GlcNAc) biosynthesis via hexosamine pathway. This chain is Glucosamine-6-phosphate deaminase 2 (GPI2), found in Giardia intestinalis (Giardia lamblia).